We begin with the raw amino-acid sequence, 250 residues long: MENNKEVLKKMVFFVLMKFLGLTILPKGICSTRPKPSQLQRSNLVKTFKIYIFFMRVTLVTHENVKSVDQLLSHDLIYNVSGPNYDKLKTELKNQEMATLFKDKNVDIYGVEYYHLCYLCENAERSACLYGGVTNHEGNHLEIPKKIVVKVSIDGIQSLSFDIEQIKNGNCSRISYTVRKYLTDNKQLYTNGPSKYETGYIKFIPKNKESFWFDFFPEPEFTQSKYLMIYKDNETLDSNTSQIEVYLTTK.

Residues 1 to 30 form the signal peptide; sequence MENNKEVLKKMVFFVLMKFLGLTILPKGIC. An intrachain disulfide couples Cys-117 to Cys-128.

Belongs to the staphylococcal/streptococcal toxin family.

Functionally, causative agent of the symptoms associated with scarlet fever, have been associated with streptococcal toxic shock-like disease and may play a role in the early events of rheumatic fever. The chain is Exotoxin type A (speA) from Streptococcus pyogenes.